The sequence spans 409 residues: Spermatogenesis-associated protein 2-like protein (409 aa).

Disordered regions lie at residues 233–257 (EDEG…TSEL), 270–299 (LWGA…PQPE), and 313–337 (RPGD…IPEP).

Belongs to the SPATA2 family.

This is Spermatogenesis-associated protein 2-like protein (SPATA2L) from Bos taurus (Bovine).